The following is a 305-amino-acid chain: Imidazoleglycerol-phosphate dehydratase (305 aa).

Belongs to the imidazoleglycerol-phosphate dehydratase family.

The protein resides in the cytoplasm. It catalyses the reaction D-erythro-1-(imidazol-4-yl)glycerol 3-phosphate = 3-(imidazol-4-yl)-2-oxopropyl phosphate + H2O. It functions in the pathway amino-acid biosynthesis; L-histidine biosynthesis; L-histidine from 5-phospho-alpha-D-ribose 1-diphosphate: step 6/9. This Neisseria meningitidis serogroup C (strain 053442) protein is Imidazoleglycerol-phosphate dehydratase.